The primary structure comprises 944 residues: snRNA-activating protein complex subunit 4 homolog (944 aa).

The tract at residues 1-22 (MSDLVMFEPGASTSTDVPTNTD) is disordered. Positions 11-22 (ASTSTDVPTNTD) are enriched in polar residues. The 68-residue stretch at 177–244 (TSNFDRRQWT…AVKSKWYNEL (68 aa)) folds into the Myb-like 1 domain. The 57-residue stretch at 245–301 (NPKWNKEHWSNEEVEKLKYLRESPKFVSWPMLALNLGTNRTSYQCMEKYKTEVSQHS) folds into the HTH myb-type 1 domain. Residues 273–297 (WPMLALNLGTNRTSYQCMEKYKTEV) constitute a DNA-binding region (H-T-H motif). One can recognise a Myb-like 2 domain in the interval 304–350 (WSQDEDTKLIALTKITSINGHIQWDKVAQCMPGRTRQQVRTRFSHTL). HTH myb-type domains are found at residues 351 to 406 (DASV…NRSA) and 407 to 459 (HVNE…AAKL). 2 consecutive DNA-binding regions (H-T-H motif) follow at residues 379 to 402 (WAKV…TNVL) and 432 to 455 (WAKC…LQLI). Residues 911–921 (ARPARPPRSSA) show a composition bias toward low complexity. The tract at residues 911–935 (ARPARPPRSSAGTPTPSHVSIDTES) is disordered. Positions 922-935 (GTPTPSHVSIDTES) are enriched in polar residues.

Broadly expressed in all tissues, including head, vulva and tail.

It is found in the nucleus. In terms of biological role, binds to the promoter regions of RNA polymerase II and III small-nuclear RNA genes, type 3 RNA polymerase III non-coding RNA genes, small nucleolar RNAs and transfer RNA genes. Required for expression of mature 21U-RNAs. This is snRNA-activating protein complex subunit 4 homolog from Caenorhabditis elegans.